We begin with the raw amino-acid sequence, 426 residues long: UDP-N-acetylglucosamine 1-carboxyvinyltransferase (426 aa).

22 to 23 (KN) serves as a coordination point for phosphoenolpyruvate. Position 99 (arginine 99) interacts with UDP-N-acetyl-alpha-D-glucosamine. The Proton donor role is filled by cysteine 123. Cysteine 123 carries the post-translational modification 2-(S-cysteinyl)pyruvic acid O-phosphothioketal. UDP-N-acetyl-alpha-D-glucosamine-binding positions include 128–132 (RPIDL), aspartate 313, and isoleucine 335.

It belongs to the EPSP synthase family. MurA subfamily.

It localises to the cytoplasm. It carries out the reaction phosphoenolpyruvate + UDP-N-acetyl-alpha-D-glucosamine = UDP-N-acetyl-3-O-(1-carboxyvinyl)-alpha-D-glucosamine + phosphate. Its pathway is cell wall biogenesis; peptidoglycan biosynthesis. In terms of biological role, cell wall formation. Adds enolpyruvyl to UDP-N-acetylglucosamine. The sequence is that of UDP-N-acetylglucosamine 1-carboxyvinyltransferase from Zymomonas mobilis subsp. mobilis (strain ATCC 31821 / ZM4 / CP4).